Reading from the N-terminus, the 204-residue chain is ATP synthase subunit b 2 (204 aa).

Residues 50-70 (IFWLAVTFGLLLFLMSKVALP) traverse the membrane as a helical segment.

The protein belongs to the ATPase B chain family. As to quaternary structure, F-type ATPases have 2 components, F(1) - the catalytic core - and F(0) - the membrane proton channel. F(1) has five subunits: alpha(3), beta(3), gamma(1), delta(1), epsilon(1). F(0) has three main subunits: a(1), b(2) and c(10-14). The alpha and beta chains form an alternating ring which encloses part of the gamma chain. F(1) is attached to F(0) by a central stalk formed by the gamma and epsilon chains, while a peripheral stalk is formed by the delta and b chains.

The protein localises to the cell inner membrane. In terms of biological role, f(1)F(0) ATP synthase produces ATP from ADP in the presence of a proton or sodium gradient. F-type ATPases consist of two structural domains, F(1) containing the extramembraneous catalytic core and F(0) containing the membrane proton channel, linked together by a central stalk and a peripheral stalk. During catalysis, ATP synthesis in the catalytic domain of F(1) is coupled via a rotary mechanism of the central stalk subunits to proton translocation. Its function is as follows. Component of the F(0) channel, it forms part of the peripheral stalk, linking F(1) to F(0). The b'-subunit is a diverged and duplicated form of b found in plants and photosynthetic bacteria. This is ATP synthase subunit b 2 (atpF2) from Rhodospirillum centenum (strain ATCC 51521 / SW).